A 439-amino-acid chain; its full sequence is ATP-dependent RNA helicase SUB2 (439 aa).

Residues 1 to 19 are compositionally biased toward acidic residues; it reads MSHEGEEDLLEYSDNEQEI. A disordered region spans residues 1 to 48; it reads MSHEGEEDLLEYSDNEQEIQVDNKETAVEGTTENEATQENGEADKKGS. Positions 29-40 are enriched in polar residues; sequence EGTTENEATQEN. The Q motif motif lies at 55-83; it reads TGFKDFLLKPELSRAIIDCGFEHPSEVQQ. The Helicase ATP-binding domain maps to 86-261; the sequence is IPQSIHGTDV…RRFLQNPLEI (176 aa). Residue 99–106 participates in ATP binding; that stretch reads AKSGLGKT. Positions 208–211 match the DECD box motif; that stretch reads DECD. Residues 273-434 form the Helicase C-terminal domain; it reads GLQQYYIKLE…EFPEEGIDPS (162 aa).

It belongs to the DEAD box helicase family. DECD subfamily.

The protein resides in the nucleus. The catalysed reaction is ATP + H2O = ADP + phosphate + H(+). Its function is as follows. ATP-binding RNA helicase involved in transcription elongation and required for the export of mRNA out of the nucleus. SUB2 also plays a role in pre-mRNA splicing and spliceosome assembly. May be involved in rDNA and telomeric silencing, and maintenance of genome integrity. The chain is ATP-dependent RNA helicase SUB2 (SUB2) from Candida glabrata (strain ATCC 2001 / BCRC 20586 / JCM 3761 / NBRC 0622 / NRRL Y-65 / CBS 138) (Yeast).